The chain runs to 319 residues: Acetyl esterase (319 aa).

Positions His91–Gly93 match the Involved in the stabilization of the negatively charged intermediate by the formation of the oxyanion hole motif. Active-site residues include Ser165, Asp262, and His292.

Belongs to the 'GDXG' lipolytic enzyme family. In terms of assembly, homodimer. Interacts with MalT and MelA.

The protein resides in the cytoplasm. In terms of biological role, displays esterase activity towards short chain fatty esters (acyl chain length of up to 8 carbons). Able to hydrolyze triacetylglycerol (triacetin) and tributyrylglycerol (tributyrin), but not trioleylglycerol (triolein) or cholesterol oleate. Negatively regulates MalT activity by antagonizing maltotriose binding. Inhibits MelA galactosidase activity. This is Acetyl esterase from Shigella boydii serotype 18 (strain CDC 3083-94 / BS512).